Reading from the N-terminus, the 194-residue chain is Probable proteasome subunit beta type-4 (194 aa).

This sequence belongs to the peptidase T1B family. In terms of assembly, the 26S proteasome consists of a 20S proteasome core and two 19S regulatory subunits. The 20S proteasome core is composed of 28 subunits that are arranged in four stacked rings, resulting in a barrel-shaped structure. The two end rings are each formed by seven alpha subunits, and the two central rings are each formed by seven beta subunits. The catalytic chamber with the active sites is on the inside of the barrel.

The protein localises to the cytoplasm. Its subcellular location is the nucleus. In terms of biological role, non-catalytic component of the proteasome, a multicatalytic proteinase complex which is characterized by its ability to cleave peptides with Arg, Phe, Tyr, Leu, and Glu adjacent to the leaving group at neutral or slightly basic pH. The proteasome has an ATP-dependent proteolytic activity. This chain is Probable proteasome subunit beta type-4, found in Schizosaccharomyces pombe (strain 972 / ATCC 24843) (Fission yeast).